The chain runs to 370 residues: Homospermidine synthase (370 aa).

The protein belongs to the deoxyhypusine synthase family. In terms of assembly, homotetramer. It depends on NAD(+) as a cofactor.

It catalyses the reaction putrescine + spermidine = sym-homospermidine + propane-1,3-diamine. It functions in the pathway alkaloid biosynthesis; pyrrolizidine alkaloid biosynthesis. In terms of biological role, catalyzes the transfer of an aminobutyl unit from spermidine onto putrescine. The resulting polyamine homospermidine is a precursor in the biosynthesis of pyrrolizidine alkaloids. The chain is Homospermidine synthase (HSS1) from Senecio vulgaris (Common groundsel).